Consider the following 436-residue polypeptide: GTPase Der (436 aa).

EngA-type G domains lie at 4-167 and 176-351; these read PVVA…KNIP and VQFC…ENHS. Residues 10–17, 57–61, 119–122, 182–189, 229–233, and 294–297 contribute to the GTP site; these read GRPNVGKS, DTGGI, NKVD, DTAGM, and NKWD. The 85-residue stretch at 352 to 436 folds into the KH-like domain; it reads MRVQTNILND…PIRIFARARK (85 aa).

The protein belongs to the TRAFAC class TrmE-Era-EngA-EngB-Septin-like GTPase superfamily. EngA (Der) GTPase family. In terms of assembly, associates with the 50S ribosomal subunit.

GTPase that plays an essential role in the late steps of ribosome biogenesis. This chain is GTPase Der, found in Bacillus licheniformis (strain ATCC 14580 / DSM 13 / JCM 2505 / CCUG 7422 / NBRC 12200 / NCIMB 9375 / NCTC 10341 / NRRL NRS-1264 / Gibson 46).